Consider the following 466-residue polypeptide: tRNA dimethylallyltransferase 2 (466 aa).

27–34 is an ATP binding site; sequence GPTGSGKS. 29–34 is a substrate binding site; sequence TGSGKS. The interval 52-55 is interaction with substrate tRNA; the sequence is DAMQ. The segment at 433-466 is disordered; that stretch reads WEHHKQGRTHRKRTTRHKNSQTYKNREVQEAEVN. The span at 437–451 shows a compositional bias: basic residues; it reads KQGRTHRKRTTRHKN. Residues 456-466 show a composition bias toward basic and acidic residues; sequence KNREVQEAEVN.

The protein belongs to the IPP transferase family. Mg(2+) is required as a cofactor. As to expression, expressed ubiquitously, with highest expression in proliferating tissues.

It localises to the cytoplasm. It catalyses the reaction adenosine(37) in tRNA + dimethylallyl diphosphate = N(6)-dimethylallyladenosine(37) in tRNA + diphosphate. Catalyzes the transfer of a dimethylallyl group onto the adenine at position 37 in tRNAs that read codons beginning with uridine, leading to the formation of N6-(dimethylallyl)adenosine (i(6)A). Involved in the cis-type cytokinin biosynthesis. This is tRNA dimethylallyltransferase 2 (IPT2) from Arabidopsis thaliana (Mouse-ear cress).